The sequence spans 432 residues: Acyl-CoA dehydrogenase AFT10-1 (432 aa).

The protein belongs to the acyl-CoA dehydrogenase family. FAD serves as cofactor.

It participates in mycotoxin biosynthesis. In terms of biological role, acyl-CoA dehydrogenase; part of the gene clusters that mediate the biosynthesis of the host-selective toxins (HSTs) AF-toxins responsible for Alternaria black spot of strawberry disease by the strawberry pathotype. AF-toxin I and III are valine derivatives of 2,3-dyhydroxy-isovaleric acid and 2-hydroxy-isovaleric acid respectively, while AF II is an isoleucine derivative of 2-hydroxy-valeric acid. These derivatives are bound to a 9,10-epoxy-8-hydroxy-9-methyl-decatrienoic acid (EDA) moiety. On cellular level, AF-toxins affect plasma membrane of susceptible cells and cause a sudden increase in loss of K(+) after a few minutes of toxin treatment. The aldo-keto reductase AFTS1 catalyzes the conversion of 2-keto-isovaleric acid (2-KIV) to 2-hydroxy-isovaleric acid (2-HIV) by reduction of its ketone to an alcohol. The acyl-CoA ligase AFT1, the hydrolase AFT2 and the enoyl-CoA hydratases AFT3 and AFT6, but also the polyketide synthase AFT9, the acyl-CoA dehydrogenase AFT10, the cytochrome P450 monooxygenase AFT11 and the oxidoreductase AFT12 are all involved in the biosynthesis of the AK-, AF- and ACT-toxin common EDA structural moiety. The exact function of each enzyme, and of additional enzymes identified within the AF-toxin clusters have still to be determined. The sequence is that of Acyl-CoA dehydrogenase AFT10-1 from Alternaria alternata (Alternaria rot fungus).